Here is a 182-residue protein sequence, read N- to C-terminus: MYSDTFDLKALIRPVVDFPKPGVIFRDITPLFQSPRGLRYVADQFIERYVEADFTHIGAMDARGFLIGSIIAHQLNKPLILFRKQGKLPADVLSEGYQTEYGEAFLEVHADSLCDGDSVLIFDDLIATGGTLLAAANLVRRTGAKVFEAAAIIDLPELEGSRRLQAAGVPTFCLTEFSLSEY.

Belongs to the purine/pyrimidine phosphoribosyltransferase family. As to quaternary structure, homodimer.

Its subcellular location is the cytoplasm. It carries out the reaction AMP + diphosphate = 5-phospho-alpha-D-ribose 1-diphosphate + adenine. It functions in the pathway purine metabolism; AMP biosynthesis via salvage pathway; AMP from adenine: step 1/1. Functionally, catalyzes a salvage reaction resulting in the formation of AMP, that is energically less costly than de novo synthesis. In Pseudomonas entomophila (strain L48), this protein is Adenine phosphoribosyltransferase.